Consider the following 469-residue polypeptide: Gamma-aminobutyric acid permease (469 aa).

Topologically, residues 1-17 are cytoplasmic; it reads MNQSQSGLKKELKTRHM. Residues 18–38 form a helical membrane-spanning segment; that stretch reads TMISIAGVIGAGLFVGSGSVI. Residue His39 is a topological domain, extracellular. The chain crosses the membrane as a helical span at residues 40–60; the sequence is STGPGAVVSYALAGLLVIFIM. Topologically, residues 61 to 94 are cytoplasmic; that stretch reads RMLGEMSAVNPTSGSFSQYAHDAIGPWAGFTIGW. A helical membrane pass occupies residues 95-115; the sequence is LYWFFWVIVIAIEAIAGAGII. Position 116 (Gln116) is a topological domain, extracellular. A helical transmembrane segment spans residues 117-137; that stretch reads YWFHDIPLWLTSLILTIVLTL. Residues 138 to 157 are Cytoplasmic-facing; the sequence is TNVYSVKSFGEFEYWFSLIK. The chain crosses the membrane as a helical span at residues 158 to 178; the sequence is VVTIIAFLIVGFAFIFGFAPG. Residues 179–200 lie on the Extracellular side of the membrane; sequence SEPVGFSNLTGKGGFFPEGISS. The helical transmembrane segment at 201–221 threads the bilayer; sequence VLLGIVVVIFSFMGTEIVAIA. The Cytoplasmic portion of the chain corresponds to 222–242; that stretch reads AGETSNPIESVTKATRSVVWR. A helical membrane pass occupies residues 243 to 263; sequence IIVFYVGSIAIVVALLPWNSA. The Extracellular portion of the chain corresponds to 264–269; it reads NILESP. A helical transmembrane segment spans residues 270 to 290; sequence FVAVLEHIGVPAAAQIMNFIV. Residues 291–328 lie on the Cytoplasmic side of the membrane; it reads LTAVLSCLNSGLYTTSRMLYSLAERNEAPRRFMKLSKK. The helical transmembrane segment at 329–349 threads the bilayer; sequence GVPVQAIVAGTFFSYIAVVMN. Residues 350-355 are Extracellular-facing; sequence YFSPDT. A helical membrane pass occupies residues 356–376; sequence VFLFLVNSSGAIALLVYLVIA. Topologically, residues 377–401 are cytoplasmic; that stretch reads VSQLKMRKKLEKTNPEALKIKMWLF. The chain crosses the membrane as a helical span at residues 402-422; it reads PFLTYLTIIAICGILVSMAFI. Over 423–425 the chain is Extracellular; the sequence is DSM. Residues 426–446 traverse the membrane as a helical segment; sequence RDELLLTGVITGIVLISYLVF. At 447 to 469 the chain is on the cytoplasmic side; sequence RKRKVSEKAAANPVTQQQPDILP.

This sequence belongs to the amino acid-polyamine-organocation (APC) superfamily. Amino acid transporter (AAT) (TC 2.A.3.1) family.

Its subcellular location is the cell membrane. The enzyme catalyses 4-aminobutanoate(in) + H(+)(in) = 4-aminobutanoate(out) + H(+)(out). It catalyses the reaction beta-alanine(in) + H(+)(in) = beta-alanine(out) + H(+)(out). It functions in the pathway amino-acid degradation; 4-aminobutanoate degradation. Functionally, transporter for gamma-aminobutyrate (GABA). Can also transport beta-alanine. Can translocate several open-chain GABA analogs (3-aminobutyrate, 3-aminopropanoate, cis-4-aminobutenoate) across the membrane via counterflow against GABA, but cannot transport muscimol. Also functions as a low-affinity proline importer. This chain is Gamma-aminobutyric acid permease, found in Bacillus subtilis (strain 168).